Here is a 94-residue protein sequence, read N- to C-terminus: Protein translocase subunit SecE (94 aa).

A disordered region spans residues 1–32 (MTDAVGSIDMPDAQDEAPDSKKSRKGGKRGKK). The span at 22–32 (KSRKGGKRGKK) shows a compositional bias: basic residues. A helical membrane pass occupies residues 65–85 (TVVIIFVVIMIGLVTLIDYGF).

It belongs to the SecE/SEC61-gamma family. Component of the Sec protein translocase complex. Heterotrimer consisting of SecY, SecE and SecG subunits. The heterotrimers can form oligomers, although 1 heterotrimer is thought to be able to translocate proteins. Interacts with the ribosome. Interacts with SecDF, and other proteins may be involved. Interacts with SecA.

Its subcellular location is the cell membrane. Functionally, essential subunit of the Sec protein translocation channel SecYEG. Clamps together the 2 halves of SecY. May contact the channel plug during translocation. In Streptomyces lividans, this protein is Protein translocase subunit SecE.